Consider the following 255-residue polypeptide: tRNA pseudouridine synthase A (255 aa).

Aspartate 52 functions as the Nucleophile in the catalytic mechanism. A substrate-binding site is contributed by tyrosine 111.

This sequence belongs to the tRNA pseudouridine synthase TruA family. Homodimer.

It catalyses the reaction uridine(38/39/40) in tRNA = pseudouridine(38/39/40) in tRNA. Its function is as follows. Formation of pseudouridine at positions 38, 39 and 40 in the anticodon stem and loop of transfer RNAs. This is tRNA pseudouridine synthase A from Cereibacter sphaeroides (strain ATCC 17023 / DSM 158 / JCM 6121 / CCUG 31486 / LMG 2827 / NBRC 12203 / NCIMB 8253 / ATH 2.4.1.) (Rhodobacter sphaeroides).